A 571-amino-acid chain; its full sequence is Proline--tRNA ligase (571 aa).

Belongs to the class-II aminoacyl-tRNA synthetase family. ProS type 1 subfamily. In terms of assembly, homodimer.

The protein localises to the cytoplasm. The catalysed reaction is tRNA(Pro) + L-proline + ATP = L-prolyl-tRNA(Pro) + AMP + diphosphate. Functionally, catalyzes the attachment of proline to tRNA(Pro) in a two-step reaction: proline is first activated by ATP to form Pro-AMP and then transferred to the acceptor end of tRNA(Pro). As ProRS can inadvertently accommodate and process non-cognate amino acids such as alanine and cysteine, to avoid such errors it has two additional distinct editing activities against alanine. One activity is designated as 'pretransfer' editing and involves the tRNA(Pro)-independent hydrolysis of activated Ala-AMP. The other activity is designated 'posttransfer' editing and involves deacylation of mischarged Ala-tRNA(Pro). The misacylated Cys-tRNA(Pro) is not edited by ProRS. This chain is Proline--tRNA ligase, found in Azotobacter vinelandii (strain DJ / ATCC BAA-1303).